Consider the following 377-residue polypeptide: MLRALKTHVEAPIVVATRAASTNAEKLEEIRERLAKGPNFQDFVQNPDNTRSEWEQYDGKLRREKGEEQRLRLPPWLKTTIPVGKNYAKIKAQMRELKLSTVCEEARCPNIGECWGGGEHGTQTATIMLMGDTCTRGCRFCSVKTARKPPPLDVNEPVNTATAIASWGLDYIVLTSVDRDDLPDGGSKHIAETVREIKARNSNIFVECLVPDFRGNLECVETIANSGLDVYAHNIETVEKLTPYVRDRRAHYRQTLQVLTEAKRFNPNLITKSSIMLGLGETDEEIENTLKDLREAGVDCVTLGQYMQPTNKHLKVIEYVTPEKFKHWEERGNELGFLYTASGPLVRSSYKAGEFFITSILENRKKRQNATEVPKEQ.

[4Fe-4S] cluster is bound by residues Cys103, Cys108, Cys114, Cys134, Cys138, Cys141, and Ser349. The 220-residue stretch at 119–338 folds into the Radical SAM core domain; that stretch reads EHGTQTATIM…EERGNELGFL (220 aa).

It belongs to the radical SAM superfamily. Lipoyl synthase family. [4Fe-4S] cluster is required as a cofactor.

It is found in the mitochondrion. The catalysed reaction is [[Fe-S] cluster scaffold protein carrying a second [4Fe-4S](2+) cluster] + N(6)-octanoyl-L-lysyl-[protein] + 2 oxidized [2Fe-2S]-[ferredoxin] + 2 S-adenosyl-L-methionine + 4 H(+) = [[Fe-S] cluster scaffold protein] + N(6)-[(R)-dihydrolipoyl]-L-lysyl-[protein] + 4 Fe(3+) + 2 hydrogen sulfide + 2 5'-deoxyadenosine + 2 L-methionine + 2 reduced [2Fe-2S]-[ferredoxin]. It functions in the pathway protein modification; protein lipoylation via endogenous pathway; protein N(6)-(lipoyl)lysine from octanoyl-[acyl-carrier-protein]: step 2/2. In terms of biological role, catalyzes the radical-mediated insertion of two sulfur atoms into the C-6 and C-8 positions of the octanoyl moiety bound to the lipoyl domains of lipoate-dependent enzymes, thereby converting the octanoylated domains into lipoylated derivatives. The chain is Lipoyl synthase, mitochondrial from Drosophila sechellia (Fruit fly).